The primary structure comprises 181 residues: U1 small nuclear ribonucleoprotein C (181 aa).

A Matrin-type zinc finger spans residues 2–34 (PKCDYCDVYLTHDSMSVRKAHNSGRNHLRNVVD). Composition is skewed to pro residues over residues 129–143 (PGMP…PGGL) and 150–174 (PIPP…PPPG). The segment at 129–181 (PGMPAGMPFPPPGGLPPNFQFPIPPPGGFPGMPPPGQGFPGMPPPGGNHDERR) is disordered.

The protein belongs to the U1 small nuclear ribonucleoprotein C family. U1 snRNP is composed of the 7 core Sm proteins B/B', D1, D2, D3, E, F and G that assemble in a heptameric protein ring on the Sm site of the small nuclear RNA to form the core snRNP, and at least 3 U1 snRNP-specific proteins U1-70K, U1-A and U1-C. U1-C interacts with U1 snRNA and the 5' splice-site region of the pre-mRNA.

It is found in the nucleus. Component of the spliceosomal U1 snRNP, which is essential for recognition of the pre-mRNA 5' splice-site and the subsequent assembly of the spliceosome. U1-C is directly involved in initial 5' splice-site recognition for both constitutive and regulated alternative splicing. The interaction with the 5' splice-site seems to precede base-pairing between the pre-mRNA and the U1 snRNA. Stimulates commitment or early (E) complex formation by stabilizing the base pairing of the 5' end of the U1 snRNA and the 5' splice-site region. The chain is U1 small nuclear ribonucleoprotein C from Sclerotinia sclerotiorum (strain ATCC 18683 / 1980 / Ss-1) (White mold).